A 493-amino-acid polypeptide reads, in one-letter code: Serine/threonine-protein kinase PBL34 (493 aa).

Disordered regions lie at residues 1–42 and 84–117; these read MGLD…EEEE and SKSANEKSNDQPVGQVSSTTTTSNAESSSSTPVI. A lipid anchor (N-myristoyl glycine) is attached at Gly-2. Basic and acidic residues predominate over residues 12–37; that stretch reads WKSEKPKETENKNHKKKNGDDNKSRN. The span at 100 to 114 shows a compositional bias: low complexity; that stretch reads SSTTTTSNAESSSST. Phosphothreonine is present on Thr-131. Residues 142 to 428 form the Protein kinase domain; sequence FRPESLLGEG…VEALKPLPHL (287 aa). ATP is bound by residues 148–156 and Lys-180; that span reads LGEGGFGCV. Position 225 is a phosphotyrosine (Tyr-225). Asp-275 (proton acceptor) is an active-site residue. At Ser-279 the chain carries Phosphoserine. Thr-306 is modified (phosphothreonine). The residue at position 309 (Ser-309) is a Phosphoserine. Residues Thr-310 and Thr-315 each carry the phosphothreonine modification. Tyr-323 carries the phosphotyrosine modification. The interval 447–493 is disordered; that stretch reads KNGSGRSQGFGSRNGQHQPVFRTLSSPHGSSPYRHQIPSPKPKGATT. The span at 450-475 shows a compositional bias: polar residues; that stretch reads SGRSQGFGSRNGQHQPVFRTLSSPHG.

Belongs to the protein kinase superfamily. Ser/Thr protein kinase family. As to quaternary structure, interacts with the Xanthomonas campestris effector XopAC/AvrAC. Interacts with SD129. Phosphorylated by SD129 at Thr-306 and Thr-310 in response to the pathogen-associated molecular pattern (PAMP) 3-OH-C10:0, a medium-chain 3-hydroxy fatty acid.

Its subcellular location is the cell membrane. The enzyme catalyses L-seryl-[protein] + ATP = O-phospho-L-seryl-[protein] + ADP + H(+). It catalyses the reaction L-threonyl-[protein] + ATP = O-phospho-L-threonyl-[protein] + ADP + H(+). Involved in chitin-triggered immune signaling and is required for reactive oxygen species (ROS) production. Acts downstream of SD129 in defense signaling triggered by the pathogen-associated molecular pattern (PAMP) 3-OH-C10:0, a medium-chain 3-hydroxy fatty acid. This is Serine/threonine-protein kinase PBL34 from Arabidopsis thaliana (Mouse-ear cress).